Here is a 101-residue protein sequence, read N- to C-terminus: uncharacterized protein (101 aa).

This is an uncharacterized protein from Mycobacterium bovis (strain ATCC BAA-935 / AF2122/97).